The primary structure comprises 320 residues: Acetyl-coenzyme A carboxylase carboxyl transferase subunit alpha (320 aa).

The CoA carboxyltransferase C-terminal domain maps to 41 to 295 (RIEEKAGQAL…GDAIAQAFDE (255 aa)).

Belongs to the AccA family. As to quaternary structure, acetyl-CoA carboxylase is a heterohexamer composed of biotin carboxyl carrier protein (AccB), biotin carboxylase (AccC) and two subunits each of ACCase subunit alpha (AccA) and ACCase subunit beta (AccD).

It is found in the cytoplasm. It carries out the reaction N(6)-carboxybiotinyl-L-lysyl-[protein] + acetyl-CoA = N(6)-biotinyl-L-lysyl-[protein] + malonyl-CoA. The protein operates within lipid metabolism; malonyl-CoA biosynthesis; malonyl-CoA from acetyl-CoA: step 1/1. Its function is as follows. Component of the acetyl coenzyme A carboxylase (ACC) complex. First, biotin carboxylase catalyzes the carboxylation of biotin on its carrier protein (BCCP) and then the CO(2) group is transferred by the carboxyltransferase to acetyl-CoA to form malonyl-CoA. In Bradyrhizobium sp. (strain ORS 278), this protein is Acetyl-coenzyme A carboxylase carboxyl transferase subunit alpha.